Consider the following 430-residue polypeptide: Serine hydroxymethyltransferase 1 (430 aa).

Residues L132 and 136–138 (GHL) contribute to the (6S)-5,6,7,8-tetrahydrofolate site. K241 bears the N6-(pyridoxal phosphate)lysine mark.

It belongs to the SHMT family. In terms of assembly, homodimer. It depends on pyridoxal 5'-phosphate as a cofactor.

The protein resides in the cytoplasm. The catalysed reaction is (6R)-5,10-methylene-5,6,7,8-tetrahydrofolate + glycine + H2O = (6S)-5,6,7,8-tetrahydrofolate + L-serine. Its pathway is one-carbon metabolism; tetrahydrofolate interconversion. It participates in amino-acid biosynthesis; glycine biosynthesis; glycine from L-serine: step 1/1. In terms of biological role, catalyzes the reversible interconversion of serine and glycine with tetrahydrofolate (THF) serving as the one-carbon carrier. This reaction serves as the major source of one-carbon groups required for the biosynthesis of purines, thymidylate, methionine, and other important biomolecules. Also exhibits THF-independent aldolase activity toward beta-hydroxyamino acids, producing glycine and aldehydes, via a retro-aldol mechanism. The polypeptide is Serine hydroxymethyltransferase 1 (Bordetella parapertussis (strain 12822 / ATCC BAA-587 / NCTC 13253)).